The chain runs to 875 residues: F-box only protein 41 (875 aa).

Disordered regions lie at residues 85 to 110, 165 to 194, and 347 to 542; these read ESTS…HHHH, SSAC…PSPA, and SSSC…PSRS. A compositionally biased stretch (pro residues) spans 170–182; that stretch reads TPPPGPGPGPCPG. The segment covering 183–194 has biased composition (low complexity); that stretch reads PASASPASPSPA. Residues 209–351 are a coiled coil; it reads ALEKLEVDRR…QLQVISSSCG (143 aa). Over residues 347-356 the composition is skewed to polar residues; sequence SSSCGSTPSA. The segment covering 359–368 has biased composition (gly residues); that stretch reads GRGGGGGGAG. Omega-N-methylarginine is present on Arg360. Residues 395–416 are compositionally biased toward polar residues; that stretch reads HGSSPSTGASSRVPAASQSSGC. Ser478 is subject to Phosphoserine. Thr479 bears the Phosphothreonine mark. The region spanning 496 to 540 is the F-box domain; sequence SEAEGPLDAPRPGPAMAGPLSSCRLSARPEGGSGRGRRAERVSPS. Position 762 is a phosphoserine (Ser762).

In terms of assembly, directly interacts with SKP1 and CUL1.

In terms of biological role, substrate-recognition component of the SCF (SKP1-CUL1-F-box protein)-type E3 ubiquitin ligase complex. This chain is F-box only protein 41 (FBXO41), found in Homo sapiens (Human).